Reading from the N-terminus, the 147-residue chain is Cyanate hydratase (147 aa).

Residues R88, E91, and S114 contribute to the active site.

The protein belongs to the cyanase family.

It carries out the reaction cyanate + hydrogencarbonate + 3 H(+) = NH4(+) + 2 CO2. Its function is as follows. Catalyzes the reaction of cyanate with bicarbonate to produce ammonia and carbon dioxide. This is Cyanate hydratase from Cupriavidus necator (strain ATCC 17699 / DSM 428 / KCTC 22496 / NCIMB 10442 / H16 / Stanier 337) (Ralstonia eutropha).